A 353-amino-acid chain; its full sequence is Ribosomal RNA small subunit methyltransferase H (353 aa).

S-adenosyl-L-methionine-binding positions include 49-51 (GGH), Asp68, Phe95, Asp126, and Gln133.

This sequence belongs to the methyltransferase superfamily. RsmH family.

The protein localises to the cytoplasm. The catalysed reaction is cytidine(1402) in 16S rRNA + S-adenosyl-L-methionine = N(4)-methylcytidine(1402) in 16S rRNA + S-adenosyl-L-homocysteine + H(+). In terms of biological role, specifically methylates the N4 position of cytidine in position 1402 (C1402) of 16S rRNA. This chain is Ribosomal RNA small subunit methyltransferase H, found in Corynebacterium urealyticum (strain ATCC 43042 / DSM 7109).